A 413-amino-acid polypeptide reads, in one-letter code: Serine hydroxymethyltransferase (413 aa).

Residues leucine 117 and 121–123 each bind (6S)-5,6,7,8-tetrahydrofolate; that span reads GHL. Residue lysine 226 is modified to N6-(pyridoxal phosphate)lysine. 349–351 is a (6S)-5,6,7,8-tetrahydrofolate binding site; that stretch reads SPF.

The protein belongs to the SHMT family. In terms of assembly, homodimer. The cofactor is pyridoxal 5'-phosphate.

The protein resides in the cytoplasm. It carries out the reaction (6R)-5,10-methylene-5,6,7,8-tetrahydrofolate + glycine + H2O = (6S)-5,6,7,8-tetrahydrofolate + L-serine. The protein operates within one-carbon metabolism; tetrahydrofolate interconversion. Its pathway is amino-acid biosynthesis; glycine biosynthesis; glycine from L-serine: step 1/1. Functionally, catalyzes the reversible interconversion of serine and glycine with tetrahydrofolate (THF) serving as the one-carbon carrier. This reaction serves as the major source of one-carbon groups required for the biosynthesis of purines, thymidylate, methionine, and other important biomolecules. Also exhibits THF-independent aldolase activity toward beta-hydroxyamino acids, producing glycine and aldehydes, via a retro-aldol mechanism. In Listeria innocua serovar 6a (strain ATCC BAA-680 / CLIP 11262), this protein is Serine hydroxymethyltransferase.